Consider the following 265-residue polypeptide: Catechol O-methyltransferase (265 aa).

Residues 1 to 2 (ML) are Cytoplasmic-facing. Residues 3 to 19 (LAAVSLGLLLLAFLLLL) form a helical; Signal-anchor for type II membrane protein membrane-spanning segment. Over 20 to 265 (RHLGWGLVAI…QGPGSSPVKS (246 aa)) the chain is Extracellular. S-adenosyl-L-methionine is bound by residues valine 85, glutamate 107, serine 115, glutamate 133, isoleucine 134, 160–163 (GASQ), serine 162, and aspartate 184. Mg(2+) is bound at residue aspartate 184. Lysine 187 provides a ligand contact to substrate. Mg(2+) is bound by residues aspartate 212 and asparagine 213. Positions 213 and 242 each coordinate substrate. Phosphoserine is present on residues serine 260, serine 261, and serine 265.

Belongs to the class I-like SAM-binding methyltransferase superfamily. Cation-dependent O-methyltransferase family. It depends on Mg(2+) as a cofactor.

It is found in the cytoplasm. Its subcellular location is the cell membrane. The enzyme catalyses a catechol + S-adenosyl-L-methionine = a guaiacol + S-adenosyl-L-homocysteine + H(+). The catalysed reaction is 2-hydroxyestrone + S-adenosyl-L-methionine = 2-hydroxy-3-methoxy-estrone + S-adenosyl-L-homocysteine + H(+). It carries out the reaction 4-hydroxyestrone + S-adenosyl-L-methionine = 4-methoxyestrone + S-adenosyl-L-homocysteine + H(+). It catalyses the reaction 2-hydroxyestrone + S-adenosyl-L-methionine = 2-methoxyestrone + S-adenosyl-L-homocysteine + H(+). The enzyme catalyses 4-hydroxy-17beta-estradiol + S-adenosyl-L-methionine = 4-methoxy-17beta-estradiol + S-adenosyl-L-homocysteine + H(+). The catalysed reaction is 2-hydroxy-17beta-estradiol + S-adenosyl-L-methionine = 2-hydroxy-3-methoxy-17beta-estradiol + S-adenosyl-L-homocysteine + H(+). It carries out the reaction 2-hydroxy-17beta-estradiol + S-adenosyl-L-methionine = 2-methoxy-17beta-estradiol + S-adenosyl-L-homocysteine + H(+). Functionally, catalyzes the O-methylation, and thereby the inactivation, of catecholamine neurotransmitters and catechol hormones. Also shortens the biological half-lives of certain neuroactive drugs, like L-DOPA, alpha-methyl DOPA and isoproterenol. This Mus musculus (Mouse) protein is Catechol O-methyltransferase.